We begin with the raw amino-acid sequence, 307 residues long: Small ribosomal subunit biogenesis GTPase RsgA (307 aa).

Residues 1-21 (MPSEHPFSDGISTPNPKETMN) form a disordered region. The segment covering 10–21 (GISTPNPKETMN) has biased composition (polar residues). One can recognise a CP-type G domain in the interval 85 to 242 (RQDAWKTKLI…LIDSPGLQEF (158 aa)). GTP contacts are provided by residues 135–138 (NKAD) and 184–192 (GQSGMGKST). Residues Cys-266, Cys-271, His-273, and Cys-279 each contribute to the Zn(2+) site.

This sequence belongs to the TRAFAC class YlqF/YawG GTPase family. RsgA subfamily. In terms of assembly, monomer. Associates with 30S ribosomal subunit, binds 16S rRNA. The cofactor is Zn(2+).

It is found in the cytoplasm. One of several proteins that assist in the late maturation steps of the functional core of the 30S ribosomal subunit. Helps release RbfA from mature subunits. May play a role in the assembly of ribosomal proteins into the subunit. Circularly permuted GTPase that catalyzes slow GTP hydrolysis, GTPase activity is stimulated by the 30S ribosomal subunit. This is Small ribosomal subunit biogenesis GTPase RsgA from Neisseria gonorrhoeae (strain ATCC 700825 / FA 1090).